Here is a 443-residue protein sequence, read N- to C-terminus: Ribulose bisphosphate carboxylase large chain (443 aa).

Lysine 3 is subject to N6,N6,N6-trimethyllysine. The substrate site is built by asparagine 112 and threonine 162. The active-site Proton acceptor is the lysine 164. Lysine 166 contributes to the substrate binding site. 3 residues coordinate Mg(2+): lysine 190, aspartate 192, and glutamate 193. Lysine 190 is subject to N6-carboxylysine. Catalysis depends on histidine 283, which acts as the Proton acceptor. Arginine 284, histidine 316, and serine 368 together coordinate substrate.

Belongs to the RuBisCO large chain family. Type I subfamily. Heterohexadecamer of 8 large chains and 8 small chains; disulfide-linked. The disulfide link is formed within the large subunit homodimers. Requires Mg(2+) as cofactor. Post-translationally, the disulfide bond which can form in the large chain dimeric partners within the hexadecamer appears to be associated with oxidative stress and protein turnover.

It is found in the plastid. It localises to the chloroplast. The catalysed reaction is 2 (2R)-3-phosphoglycerate + 2 H(+) = D-ribulose 1,5-bisphosphate + CO2 + H2O. The enzyme catalyses D-ribulose 1,5-bisphosphate + O2 = 2-phosphoglycolate + (2R)-3-phosphoglycerate + 2 H(+). Its function is as follows. RuBisCO catalyzes two reactions: the carboxylation of D-ribulose 1,5-bisphosphate, the primary event in carbon dioxide fixation, as well as the oxidative fragmentation of the pentose substrate in the photorespiration process. Both reactions occur simultaneously and in competition at the same active site. This Iris germanica (Bearded iris) protein is Ribulose bisphosphate carboxylase large chain.